The primary structure comprises 569 residues: Membrane protein insertase YidC (569 aa).

8 helical membrane passes run 7–24, 219–239, 299–319, 340–360, 366–386, 436–456, 485–505, and 526–546; these read VLWV…DNYN, GSAL…PAIY, LYAV…TASM, FELV…FWLM, ILGN…LAFF, IGGC…YWVL, IGTF…SMFI, and PIAF…YWVV.

It belongs to the OXA1/ALB3/YidC family. Type 1 subfamily. As to quaternary structure, interacts with the Sec translocase complex via SecD. Specifically interacts with transmembrane segments of nascent integral membrane proteins during membrane integration.

The protein resides in the cell inner membrane. Its function is as follows. Required for the insertion and/or proper folding and/or complex formation of integral membrane proteins into the membrane. Involved in integration of membrane proteins that insert both dependently and independently of the Sec translocase complex, as well as at least some lipoproteins. Aids folding of multispanning membrane proteins. In Herminiimonas arsenicoxydans, this protein is Membrane protein insertase YidC.